Consider the following 340-residue polypeptide: Beta-ketoacyl-[acyl-carrier-protein] synthase III (340 aa).

Residues Cys122 and His260 contribute to the active site. The ACP-binding stretch occupies residues Gln261–Arg265. Asn291 is an active-site residue.

It belongs to the thiolase-like superfamily. FabH family. In terms of assembly, homodimer.

The protein resides in the cytoplasm. The enzyme catalyses malonyl-[ACP] + acetyl-CoA + H(+) = 3-oxobutanoyl-[ACP] + CO2 + CoA. Its pathway is lipid metabolism; fatty acid biosynthesis. Its function is as follows. Catalyzes the condensation reaction of fatty acid synthesis by the addition to an acyl acceptor of two carbons from malonyl-ACP. Catalyzes the first condensation reaction which initiates fatty acid synthesis and may therefore play a role in governing the total rate of fatty acid production. Possesses both acetoacetyl-ACP synthase and acetyl transacylase activities. Its substrate specificity determines the biosynthesis of branched-chain and/or straight-chain of fatty acids. The protein is Beta-ketoacyl-[acyl-carrier-protein] synthase III of Mycobacteroides abscessus (strain ATCC 19977 / DSM 44196 / CCUG 20993 / CIP 104536 / JCM 13569 / NCTC 13031 / TMC 1543 / L948) (Mycobacterium abscessus).